The chain runs to 162 residues: MNILGIDPGSRNCGYAILHHDPKKGNRLVEAGLIKIKERTLQHQILEFVEGIDLVLKNHSIDEVAIEDIFYAYNPKTVIKLAQFRGALSLKILQDLGNFYEYTPLQVKKALTGHGKADKSQVAFMVKRLLGLKGEIKPLDITDAIAVAITHSQRIKLGGIPT.

Catalysis depends on residues aspartate 7, glutamate 67, and aspartate 140. The Mg(2+) site is built by aspartate 7, glutamate 67, and aspartate 140.

This sequence belongs to the RuvC family. In terms of assembly, homodimer which binds Holliday junction (HJ) DNA. The HJ becomes 2-fold symmetrical on binding to RuvC with unstacked arms; it has a different conformation from HJ DNA in complex with RuvA. In the full resolvosome a probable DNA-RuvA(4)-RuvB(12)-RuvC(2) complex forms which resolves the HJ. Mg(2+) is required as a cofactor.

Its subcellular location is the cytoplasm. The catalysed reaction is Endonucleolytic cleavage at a junction such as a reciprocal single-stranded crossover between two homologous DNA duplexes (Holliday junction).. In terms of biological role, the RuvA-RuvB-RuvC complex processes Holliday junction (HJ) DNA during genetic recombination and DNA repair. Endonuclease that resolves HJ intermediates. Cleaves cruciform DNA by making single-stranded nicks across the HJ at symmetrical positions within the homologous arms, yielding a 5'-phosphate and a 3'-hydroxyl group; requires a central core of homology in the junction. The consensus cleavage sequence is 5'-(A/T)TT(C/G)-3'. Cleavage occurs on the 3'-side of the TT dinucleotide at the point of strand exchange. HJ branch migration catalyzed by RuvA-RuvB allows RuvC to scan DNA until it finds its consensus sequence, where it cleaves and resolves the cruciform DNA. In Wolinella succinogenes (strain ATCC 29543 / DSM 1740 / CCUG 13145 / JCM 31913 / LMG 7466 / NCTC 11488 / FDC 602W) (Vibrio succinogenes), this protein is Crossover junction endodeoxyribonuclease RuvC.